The following is a 391-amino-acid chain: MHTTYLKNLIGFESLTPQSNGAIEYIDDLLKEHGFKTEVKIFGETEQVTNLYAVYGNSKPNICFVGHVDVVPAGDPNLWHNSNPFKAHEQEGKIYGRGTVDMKGSIACFLAASLDFIKNNTDFVGSISFLLTSDEEGKAKHGTKEMLQYIYNQGHEIDFAIVGEPTCEKEIGDTIKIGRRGSINFKLAVKGLGGHVAYPQKANNPLPCLIRILNELTNIKLDKGTEFFQNSNLEVTNIDVDNNTTNVIPETATVHFNIRFNNLHSAETLAKQVEEIIKQHCQKHKLDYTLEYNSSADSFIQNPNDKIKEFATIVEKTLNIKPKFSTSGGTSDARFVKNYCPLVEFGLLSDTAHKINEYTKISDLQKLYDVYYNFLMETLNVTGSPPLLGMT.

His67 is a binding site for Zn(2+). The active site involves Asp69. Asp101 lines the Zn(2+) pocket. Glu135 functions as the Proton acceptor in the catalytic mechanism. Positions 136, 164, and 353 each coordinate Zn(2+).

It belongs to the peptidase M20A family. DapE subfamily. As to quaternary structure, homodimer. It depends on Zn(2+) as a cofactor. The cofactor is Co(2+).

It catalyses the reaction N-succinyl-(2S,6S)-2,6-diaminopimelate + H2O = (2S,6S)-2,6-diaminopimelate + succinate. Its pathway is amino-acid biosynthesis; L-lysine biosynthesis via DAP pathway; LL-2,6-diaminopimelate from (S)-tetrahydrodipicolinate (succinylase route): step 3/3. Its function is as follows. Catalyzes the hydrolysis of N-succinyl-L,L-diaminopimelic acid (SDAP), forming succinate and LL-2,6-diaminopimelate (DAP), an intermediate involved in the bacterial biosynthesis of lysine and meso-diaminopimelic acid, an essential component of bacterial cell walls. The sequence is that of Succinyl-diaminopimelate desuccinylase from Rickettsia bellii (strain RML369-C).